The sequence spans 843 residues: Beta-mannosidase B (843 aa).

The active-site Proton donor is the Glu-432.

This sequence belongs to the glycosyl hydrolase 2 family. Beta-mannosidase B subfamily.

It catalyses the reaction Hydrolysis of terminal, non-reducing beta-D-mannose residues in beta-D-mannosides.. It participates in glycan metabolism; N-glycan degradation. Functionally, exoglycosidase that cleaves the single beta-linked mannose residue from the non-reducing end of beta-mannosidic oligosaccharides of various complexity and length. Prefers mannobiose over mannotriose and has no activity against polymeric mannan. Is also severely restricted by galactosyl substitutions at the +1 subsite. Releases the terminal mannose residue from mannobiose, mannotriose and galactosyl-mannotriose (GM3), but not from galactosyl-mannobiose (GM2) or di-galactosyl-mannopentaose (G2M5). The chain is Beta-mannosidase B (mndB) from Emericella nidulans (strain FGSC A4 / ATCC 38163 / CBS 112.46 / NRRL 194 / M139) (Aspergillus nidulans).